A 1241-amino-acid chain; its full sequence is MIENWPKKPEGSQWTDDQWKAVVANGRDILVAAAAGSGKTAVLVERIIKKIINEENPVDVDRLLVVTFTNAAAQEMKNRIGEALEKVLIDEPGSQHVRKQLSLLNKASISTIHSFCLQVIRGYYYMLDVDPRFRIANQTENELLKEEVLDDILEEEYGIEDNTIFFELVDRYTSDRSDDDLQRMILALHTESRAHPNPEKWLDKLVEAYDVEGKTIEDLVYASYLLEDVKFQLETAEQHIRKATELAMLPDGPAPRIETLQADLALLGTLSSAARESWTSVYEAMQNVSWQTLKRIKKSDYNEDIVKQVDSLRNKAKDEVKKLQEELFSRRPESFLRDFQDMHPVLEKLVQLVKVFTERFQAMKRDKGMVDFTDLEHFCLQILSEQSEDGEMKPSAVALQYRNKFAEVLVDEYQDTNFVQESIIKFVTKDSESEGNLFMVGDVKQSIYRFRLAEPGLFLGKYKRFTQEGLGGGMKIDLAKNFRSRHEVLAGTNFIFKQIMGEEVGEIDYDADAELKLGASYPEGEDVAAELLCIQQTEEEVIDGEEGAEVEKAQLEARLMAQRIKAMVDSGYEVYDRKTDSMRPVQYRDFVILLRSMPWAPQIMEELKLQGIPVYADLATGYFEATEVNIMMNVFRVIDNPMQDIPLAAVLRSPIVGLNDEELATLRAHGKKGSFYEVMSSFLKGAPLEEEKELHDKLEWFYNLLQGWREFARQQSLSDLIWKVYGETGYYDFVGGLPAGKQRQANLRVLYDRARQYEATSFRGLFRFLRFIERILERGDDMGTARALGEQEDVVRIMTIHKSKGLEFPVVFVAGLGRRFNTQDLMKRFLLHKDFGFGSQFIDPRKRIKYTTLSQLAIKRKMKMELIAEEMRVLYVALTRAKEKLILIGTVKDATKEMEKWLDAREHSEWLLPDHVRAGASCYLDWIAPSLYRHRDSEMLLELGQGSIPDEIYGYDTSWKVEVVDGNTLLAPEPVQEEKQELLEALREKKAVPLQSERKDEVYDRLMWKYGYEEATSHRAKQSVTEIKRNYQSEEGSDNAFIKKLRAPIKTRPRFMEKKGLTYAERGTAVHAVMQHVDLKKPITVEVLQEQIAGMVNKELLTFEQAEEIAVEKVISFFDSDLGKRVLAAKSVEREVPFTMMLAAEEAYQDWQGESGESILVQGVIDCMIEEEDGITLIDFKTDTIEGKFPGGFEQAKPILETRYKVQLSLYAKALEKSLQHPVKEKCLYFFDGNHVIKVEE.

The UvrD-like helicase ATP-binding domain maps to 12 to 485 (SQWTDDQWKA…IDLAKNFRSR (474 aa)). ATP is bound at residue 33–40 (AAAGSGKT). Residues 505-805 (GEIDYDADAE…RIMTIHKSKG (301 aa)) enclose the UvrD-like helicase C-terminal domain.

This sequence belongs to the helicase family. AddA subfamily. Heterodimer of AddA and AddB/RexB. The cofactor is Mg(2+).

It catalyses the reaction Couples ATP hydrolysis with the unwinding of duplex DNA by translocating in the 3'-5' direction.. The enzyme catalyses ATP + H2O = ADP + phosphate + H(+). Functionally, the heterodimer acts as both an ATP-dependent DNA helicase and an ATP-dependent, dual-direction single-stranded exonuclease. Recognizes the chi site generating a DNA molecule suitable for the initiation of homologous recombination. The AddA nuclease domain is required for chi fragment generation; this subunit has the helicase and 3' -&gt; 5' nuclease activities. In Bacillus thuringiensis (strain Al Hakam), this protein is ATP-dependent helicase/nuclease subunit A.